Consider the following 466-residue polypeptide: L-seryl-tRNA(Sec) selenium transferase (466 aa).

At lysine 294 the chain carries N6-(pyridoxal phosphate)lysine.

Belongs to the SelA family. The cofactor is pyridoxal 5'-phosphate.

The protein resides in the cytoplasm. The enzyme catalyses L-seryl-tRNA(Sec) + selenophosphate + H(+) = L-selenocysteinyl-tRNA(Sec) + phosphate. It functions in the pathway aminoacyl-tRNA biosynthesis; selenocysteinyl-tRNA(Sec) biosynthesis; selenocysteinyl-tRNA(Sec) from L-seryl-tRNA(Sec) (bacterial route): step 1/1. Functionally, converts seryl-tRNA(Sec) to selenocysteinyl-tRNA(Sec) required for selenoprotein biosynthesis. This is L-seryl-tRNA(Sec) selenium transferase from Carboxydothermus hydrogenoformans (strain ATCC BAA-161 / DSM 6008 / Z-2901).